A 100-amino-acid chain; its full sequence is Large ribosomal subunit protein bL21 (100 aa).

The protein belongs to the bacterial ribosomal protein bL21 family. In terms of assembly, part of the 50S ribosomal subunit. Contacts protein L20.

Functionally, this protein binds to 23S rRNA in the presence of protein L20. The chain is Large ribosomal subunit protein bL21 from Mycoplasma genitalium (strain ATCC 33530 / DSM 19775 / NCTC 10195 / G37) (Mycoplasmoides genitalium).